The primary structure comprises 128 residues: S-adenosylmethionine decarboxylase proenzyme (128 aa).

Residue Ser-61 is the Schiff-base intermediate with substrate; via pyruvic acid of the active site. Ser-61 carries the pyruvic acid (Ser); by autocatalysis modification. His-66 acts as the Proton acceptor; for processing activity in catalysis. Catalysis depends on Cys-81, which acts as the Proton donor; for catalytic activity.

This sequence belongs to the prokaryotic AdoMetDC family. Type 1 subfamily. As to quaternary structure, heterotetramer of two alpha and two beta chains arranged as a dimer of alpha/beta heterodimers. It depends on pyruvate as a cofactor. Post-translationally, is synthesized initially as an inactive proenzyme. Formation of the active enzyme involves a self-maturation process in which the active site pyruvoyl group is generated from an internal serine residue via an autocatalytic post-translational modification. Two non-identical subunits are generated from the proenzyme in this reaction, and the pyruvate is formed at the N-terminus of the alpha chain, which is derived from the carboxyl end of the proenzyme. The post-translation cleavage follows an unusual pathway, termed non-hydrolytic serinolysis, in which the side chain hydroxyl group of the serine supplies its oxygen atom to form the C-terminus of the beta chain, while the remainder of the serine residue undergoes an oxidative deamination to produce ammonia and the pyruvoyl group blocking the N-terminus of the alpha chain.

The enzyme catalyses S-adenosyl-L-methionine + H(+) = S-adenosyl 3-(methylsulfanyl)propylamine + CO2. It participates in amine and polyamine biosynthesis; S-adenosylmethioninamine biosynthesis; S-adenosylmethioninamine from S-adenosyl-L-methionine: step 1/1. Functionally, catalyzes the decarboxylation of S-adenosylmethionine to S-adenosylmethioninamine (dcAdoMet), the propylamine donor required for the synthesis of the polyamines spermine and spermidine from the diamine putrescine. This Parasynechococcus marenigrum (strain WH8102) protein is S-adenosylmethionine decarboxylase proenzyme.